The primary structure comprises 1516 residues: MSNLRRFSRSLAVAALVLLPFAAVQAEDTVEPSGYTPMAGESFFLLADSSFATDEEARVRLEAPGRDYRRYRMEPYGGVDVRLYRIEQPLEFLKRQKNLHRVLAEGQFKGEGLSNTLAYLWDNWYRKSRRVMQRAFSYESRQQVTEAVPELKMGNAMTAPTPYDAQPQYAPIPGLPLVSQFRYPLWDAKPIEPPQDVKLAGSSSEFINVVPGNVYIPLGKLKPGLYLVEALVGKYRATTVVFVSNSVAVSKVAGDELLVWTARKHEGTPVPDTKVLWTDGLGVMSSGNTDADGLLRLKHASPERSYVIGEDREGGVFVSENFYYDSEIYDTKIYAFTDRPLYRPGDWVSLKMVGREFKDARQSQAAASAPVRLSVIDASGTVLQSLDLRFDAKSGANGRFQLPENAVAGGYELRFDYRGQTYSSAFRVAEYIKPHFEVALDLAKPDFKTAEPVKGEIVLLYPDGKPVANARLQLSLRAQQLSMVDNELQYLGQFPVELSSTELTTDGKGRAAIELPPAEKPSRYMLTIFASDGAAYRVKTSKEILIERGAARYRLSAPQRFSAAGEKVEFSYASEQPTPLKPSSYQWIRLEDRATDSGPVADGRFALTFERPGTYSVELRDDKGQLLGATGHSVSGEGVKSVPGTVEVVFDKPEYRTGEEASALITFPEPVEDALLSLERDKVEATALLSKGADWLRLEKLNPTQYRVWIPVREEFSPNLTFSVLYTKGGDYSFQNAGIKVGMPQVEIDIATDKERYEPGETVTVTLATRFAGKPVSSHLTVSVVDEMVYALQAEIAPGIDQFFYHPRRNNVRTSASLAFISYDVALPGSTSAPGRANRSERGVKVLERPRREDVDTAAWQPELVTDAQGKASFSFRMPDSLTRWRITARAIDDNGQVGQKKQFLRSEKPLYLKWSGPTRFRQGDQPDLGLFVFNQGEQPVKAELLSGPPGSQRSQTLELAKGVNYIPLAQQPLSDGDWSAELRQDGQVRDRLAVRFNLLADGWQVEQMQNLSLAAASNPLQLPADARDVRLRLADGPAAAYLGNLDDLLEYPYGGVEQTASQLLPLSIAYPALAGGEPRIRDRLRLIMQNSRLRLVQMAGPDAWFAWWGGDVDGDAFLTAYAYYADWYASRALEIQLPAEHWQRILEPYAKQATQTPLLQRALILAFARDMQLPVNTLLGGLLNDLANAGEGQARAEPLEADDGLVLGDPDSAVGLAAARVLAVDLARQLRVAVPAPLAAQAETATQRLREAGLPFTDALLASRSAVDGQQASALLQRLAPAQSTLERALALTWLQGALAQAPQGKLPQPPKDWQAQRGASGETYWQWRGRGIPSWVDLDEAPARPLPVALSYRSAQAPSGQLPVQISRRLLRLVPGEGAFEFKVEEVGDKPLSSDELYLDEVTLNVPEDTALRYGMLELPLPPGADVERTTWGIKISGLAGDEATTLERARNEPGELFYGVPVDSLSGEQRFRHLVRFSQKGSFNLPPARYLRLYAPEQQALEAKPALAKVKVE.

An N-terminal signal peptide occupies residues 1 to 26; that stretch reads MSNLRRFSRSLAVAALVLLPFAAVQA.

This sequence belongs to the protease inhibitor I39 (alpha-2-macroglobulin) family. Bacterial alpha-2-macroglobulin subfamily.

In Pseudomonas aeruginosa (strain ATCC 15692 / DSM 22644 / CIP 104116 / JCM 14847 / LMG 12228 / 1C / PRS 101 / PAO1), this protein is Alpha-2-macroglobulin homolog.